The sequence spans 400 residues: MEPVLQARGKRENVLGNAREERCVPGFPSACEQKLEQEKLSGVVKRVHRDLRKKYREAGDFEKIWLEHCKDKGRLCEYAVAMKALADNHWAKKCEGEGRIEWCLGVCQEYFFNGGKKKAIEKDARRATLNKLQSPNHAEDGVSDFSVPNIKPLNDEYMTGKIRLLDVGSCYNPFLKYEDFLAVGIDIVPAVETVCKCDFLNLQIQRPLQFAPDAIDAFLKQLESPIDYLPAELFHVVVFSLLLSYFPSPYQRWICCKKAHELLTLNGLLLIITPDSSHQNRHAVMMKSWKIAIESLGFRRMTYSKFSHMHLMAFRKTSLKTTSDLITMNYPDMLYIPQDFNYDGEEDYFSPCCARSELEDEQLACGFTELPDTPYDSDSGESQNSTMPFYEFEDPILLLT.

Arg99, Gly168, Asp186, Asp198, Phe199, and Ser240 together coordinate S-adenosyl-L-methionine.

The protein belongs to the BMT2/SAMTOR family. In terms of assembly, interacts with the GATOR1 complex; interaction is disrupted when samtor binds S-adenosyl-L-methionine. Interacts with the KICSTOR complex; interaction is disrupted when samtor binds S-adenosyl-L-methionine.

S-adenosyl-L-methionine-binding protein that acts as an inhibitor of mTORC1 signaling via interaction with the GATOR1 and KICSTOR complexes. Acts as a sensor of S-adenosyl-L-methionine to signal methionine sufficiency to mTORC1: in presence of methionine, binds S-adenosyl-L-methionine, leading to disrupt interaction with the GATOR1 and KICSTOR complexes and promote mTORC1 signaling. Upon methionine starvation, S-adenosyl-L-methionine levels are reduced, thereby promoting the association with GATOR1 and KICSTOR, leading to inhibit mTORC1 signaling. Probably also acts as a S-adenosyl-L-methionine-dependent methyltransferase. The polypeptide is S-adenosylmethionine sensor upstream of mTORC1 (Xenopus tropicalis (Western clawed frog)).